Consider the following 761-residue polypeptide: RNA-binding protein 12B (761 aa).

Phosphoserine occurs at positions 98, 101, and 112. Residue Lys-114 forms a Glycyl lysine isopeptide (Lys-Gly) (interchain with G-Cter in SUMO2) linkage. Residues Ser-120–Thr-147 form a disordered region. A Glycyl lysine isopeptide (Lys-Gly) (interchain with G-Cter in SUMO2) cross-link involves residue Lys-151. The RRM 1 domain occupies Pro-155–Glu-230. A compositionally biased stretch (basic and acidic residues) spans Leu-247–Arg-262. The tract at residues Leu-247 to Ser-278 is disordered. A phosphoserine mark is found at Ser-250 and Ser-254. Residues His-263–Ser-278 show a composition bias toward basic residues. Residue Thr-276 is modified to Phosphothreonine. Ser-278, Ser-280, Ser-292, and Ser-294 each carry phosphoserine. One can recognise an RRM 2 domain in the interval Phe-284–Arg-360. Lys-319 is modified (N6-acetyllysine). Lys-335 participates in a covalent cross-link: Glycyl lysine isopeptide (Lys-Gly) (interchain with G-Cter in SUMO2). A compositionally biased stretch (basic and acidic residues) spans Lys-372–Gly-384. The tract at residues Lys-372–Gln-392 is disordered. Ser-377 carries the phosphoserine modification. The 78-residue stretch at Leu-400 to Glu-477 folds into the RRM 3 domain. Glycyl lysine isopeptide (Lys-Gly) (interchain with G-Cter in SUMO2) cross-links involve residues Lys-514 and Lys-541. The segment covering Asp-538–Arg-621 has biased composition (basic and acidic residues). The interval Asp-538–Leu-690 is disordered. Ser-575 and Ser-591 each carry phosphoserine. Polar residues predominate over residues Leu-627–Thr-654. The segment covering Ser-661 to Gly-672 has biased composition (low complexity).

This Pongo abelii (Sumatran orangutan) protein is RNA-binding protein 12B (RBM12B).